The sequence spans 955 residues: Kinesin-like protein NACK2 (955 aa).

One can recognise a Kinesin motor domain in the interval 36–357 (KILVTIRVRP…LCFATSAKEV (322 aa)). 120–127 (GQTSSGKT) serves as a coordination point for ATP. Coiled coils occupy residues 366–443 (VVAE…LKGS) and 566–604 (KASLKEEIARLRSQESNIASLEQKLENVQRSIDELVMHL).

It belongs to the TRAFAC class myosin-kinesin ATPase superfamily. Kinesin family. KIN-7 subfamily.

It is found in the cytoplasm. The protein localises to the nucleus. The protein resides in the cytoskeleton. Its subcellular location is the phragmoplast. Its function is as follows. Probable plus end-directed motor protein that may function in the NACK-PQR (NPK1-NQK1/MEK1-NRK1) MAP kinase signaling pathway, which is essential for somatic cell cytokinesis, especially for the cell-plate formation and its expansion. May regulate the activity and the localization of NPK1, probably by association through the non-catalytic region of the kinase. This chain is Kinesin-like protein NACK2 (NACK2), found in Nicotiana tabacum (Common tobacco).